The following is a 430-amino-acid chain: Enolase (430 aa).

A (2R)-2-phosphoglycerate-binding site is contributed by Q165. The Proton donor role is filled by E207. Residues D244, E287, and D314 each coordinate Mg(2+). Residues K339, R368, S369, and K390 each coordinate (2R)-2-phosphoglycerate. K339 acts as the Proton acceptor in catalysis.

This sequence belongs to the enolase family. Component of the RNA degradosome, a multiprotein complex involved in RNA processing and mRNA degradation. Requires Mg(2+) as cofactor.

The protein localises to the cytoplasm. The protein resides in the secreted. It localises to the cell surface. The enzyme catalyses (2R)-2-phosphoglycerate = phosphoenolpyruvate + H2O. It functions in the pathway carbohydrate degradation; glycolysis; pyruvate from D-glyceraldehyde 3-phosphate: step 4/5. Functionally, catalyzes the reversible conversion of 2-phosphoglycerate (2-PG) into phosphoenolpyruvate (PEP). It is essential for the degradation of carbohydrates via glycolysis. The polypeptide is Enolase (Xanthomonas axonopodis pv. citri (strain 306)).